We begin with the raw amino-acid sequence, 294 residues long: Acetyl-coenzyme A carboxylase carboxyl transferase subunit beta (294 aa).

In terms of domain architecture, CoA carboxyltransferase N-terminal spans 27–294 (LWHKCPSCDA…PSPVALPVTA (268 aa)). The Zn(2+) site is built by cysteine 31, cysteine 34, cysteine 50, and cysteine 53. Residues 31-53 (CPSCDAVLYRPELEKTLDVCPKC) form a C4-type zinc finger.

The protein belongs to the AccD/PCCB family. Acetyl-CoA carboxylase is a heterohexamer composed of biotin carboxyl carrier protein (AccB), biotin carboxylase (AccC) and two subunits each of ACCase subunit alpha (AccA) and ACCase subunit beta (AccD). The cofactor is Zn(2+).

Its subcellular location is the cytoplasm. It carries out the reaction N(6)-carboxybiotinyl-L-lysyl-[protein] + acetyl-CoA = N(6)-biotinyl-L-lysyl-[protein] + malonyl-CoA. The protein operates within lipid metabolism; malonyl-CoA biosynthesis; malonyl-CoA from acetyl-CoA: step 1/1. Component of the acetyl coenzyme A carboxylase (ACC) complex. Biotin carboxylase (BC) catalyzes the carboxylation of biotin on its carrier protein (BCCP) and then the CO(2) group is transferred by the transcarboxylase to acetyl-CoA to form malonyl-CoA. This Ectopseudomonas mendocina (strain ymp) (Pseudomonas mendocina) protein is Acetyl-coenzyme A carboxylase carboxyl transferase subunit beta.